We begin with the raw amino-acid sequence, 297 residues long: Pyridoxal 5'-phosphate synthase subunit Pdx1 (297 aa).

D27 is a D-ribose 5-phosphate binding site. K84 (schiff-base intermediate with D-ribose 5-phosphate) is an active-site residue. G156 provides a ligand contact to D-ribose 5-phosphate. R168 is a D-glyceraldehyde 3-phosphate binding site. D-ribose 5-phosphate contacts are provided by residues G217 and 238–239 (GS).

The protein belongs to the PdxS/SNZ family. In terms of assembly, homohexamer and homododecamer. In the presence of Pdx2, forms a dodecamer of heterodimers.

The enzyme catalyses aldehydo-D-ribose 5-phosphate + D-glyceraldehyde 3-phosphate + L-glutamine = pyridoxal 5'-phosphate + L-glutamate + phosphate + 3 H2O + H(+). The protein operates within cofactor biosynthesis; pyridoxal 5'-phosphate biosynthesis. In terms of biological role, catalyzes the formation of pyridoxal 5'-phosphate from ribose 5-phosphate (RBP), glyceraldehyde 3-phosphate (G3P) and ammonia. The ammonia is provided by Pdx2. Can also use ribulose 5-phosphate and dihydroxyacetone phosphate as substrates, resulting from enzyme-catalyzed isomerization of RBP and G3P, respectively. This is Pyridoxal 5'-phosphate synthase subunit Pdx1 from Plasmodium berghei.